Consider the following 610-residue polypeptide: MSRYFLLACTLALQCVAASQEDYIVKDLPGLSNIPAVVRPVMHAGHLEIDEEHNTELFFWRFQNPKNNGTHQTLHRNELIVWLNGGPGCSSMDGAMMETGPLRVSDKLEVELNPGSWTQVADILFVDQPAGTGFSYTDSYDTELKQAAQHFWQFLKTYYQLFPEDRTKKLYLAGESYAGQYIPYFAKEIIENNSLNISLEGLLIGNGWIDPDIQSLSYVPFSLEAGFLDRQSPSMAQVLKQHEKCQQAIDDPSNHDFEKVECVKIFHSILAASRDETKPAKEQCVNMYDYRKHDYFPACGSNWPEGLPTVTKFLNLDAVQKALNLKSAKRWHECDGKVEFFFQPEHSVKSFDLLPKLLEKMKIALFAGDKDIICNHKSIEMVIEKLQITPGQFGFTNSRKSGWIYDGQEVGEVETQSNLTYIKVFNSSHMVPYDLPEVSRGLFDIITNSIEKRSTDIVTPVYDSRGNYKFVEEKQDTDQNEEEEKEKPPKHHHSLTFYVAEVAILAVLAYLLYSFYKSFAKSRKSAFLSLSSKKKKKQVHWFDESDIGMDQEAGEADHKPKSMLESVFNKLGYGGQYDTVQDGRDIEMAPVEEHEDQFIIQSDEEEFGHR.

Residues 1–18 (MSRYFLLACTLALQCVAA) form the signal peptide. The Lumenal segment spans residues 19-494 (SQEDYIVKDL…KEKPPKHHHS (476 aa)). Asn68 carries an N-linked (GlcNAc...) asparagine glycan. Ser176 is an active-site residue. Residues Asn192 and Asn196 are each glycosylated (N-linked (GlcNAc...) asparagine). The active site involves Asp371. N-linked (GlcNAc...) asparagine glycosylation is found at Asn418 and Asn426. His429 is an active-site residue. The disordered stretch occupies residues 469 to 491 (KFVEEKQDTDQNEEEEKEKPPKH). The helical transmembrane segment at 495–515 (LTFYVAEVAILAVLAYLLYSF) threads the bilayer. Over 516–610 (YKSFAKSRKS…QSDEEEFGHR (95 aa)) the chain is Cytoplasmic.

Belongs to the peptidase S10 family.

The protein localises to the golgi apparatus. It localises to the trans-Golgi network membrane. The catalysed reaction is Preferential release of a C-terminal arginine or lysine residue.. Its function is as follows. Protease with a carboxypeptidase B-like function involved in the C-terminal processing of the lysine and arginine residues from protein precursors. Promotes cell fusion and is involved in the programmed cell death. The polypeptide is Pheromone-processing carboxypeptidase KEX1 (KEX1) (Ogataea parapolymorpha (strain ATCC 26012 / BCRC 20466 / JCM 22074 / NRRL Y-7560 / DL-1) (Yeast)).